The sequence spans 261 residues: Zinc finger protein 664 (261 aa).

9 consecutive C2H2-type zinc fingers follow at residues 3 to 25 (YKCP…QKIH), 31 to 53 (HKCD…WRDH), 59 to 81 (YKCD…KKIH), 87 to 109 (YKCY…MRVH), 115 to 137 (YVCS…QRVH), 143 to 165 (FKCE…QRVH), 171 to 193 (YKCY…QRVH), 199 to 221 (YRCC…QRVH), and 227 to 249 (FKCD…QRVH). Lysine 257 is covalently cross-linked (Glycyl lysine isopeptide (Lys-Gly) (interchain with G-Cter in SUMO2)).

This sequence belongs to the krueppel C2H2-type zinc-finger protein family.

It is found in the nucleus. In terms of biological role, may be involved in transcriptional regulation. This chain is Zinc finger protein 664 (ZNF664), found in Pongo abelii (Sumatran orangutan).